Here is a 211-residue protein sequence, read N- to C-terminus: 5-formyltetrahydrofolate cyclo-ligase (211 aa).

ATP is bound at residue 4–8; sequence KQLLR. Residues glutamate 56 and 152-156 contribute to the substrate site; that span reads HGAGY. ATP contacts are provided by residues 151 to 158 and aspartate 194; that span reads GHGAGYYD.

This sequence belongs to the 5-formyltetrahydrofolate cyclo-ligase family. Post-translationally, N-glycosylated.

The protein resides in the mitochondrion. The enzyme catalyses (6S)-5-formyl-5,6,7,8-tetrahydrofolate + ATP = (6R)-5,10-methenyltetrahydrofolate + ADP + phosphate. Functionally, only enzyme known to utilize 5-formyltetrahydrofolate (folinic acid) as substrate. Contributes to tetrahydrofolate metabolism in an alternative way of folate biosynthesis. May regulate carbon flow through the folate-dependent one-carbon metabolic network that supplies carbon for the biosynthesis of purines, thymidine and amino acids. This is 5-formyltetrahydrofolate cyclo-ligase (FAU1) from Saccharomyces cerevisiae (strain ATCC 204508 / S288c) (Baker's yeast).